A 589-amino-acid chain; its full sequence is ATP-dependent ubiquitin transferase-like protein Cap2 (589 aa).

A Glycyl cysteine dithioester (Cys-Gly) (interchain with G-Cter in DncV) cross-link involves residue Cys-13. A Glycyl lysine isopeptide (Lys-Gly) (interchain with G-Cter in DncV) cross-link involves residue Lys-77. The active-site For E2-like domain is the Cys-91. Residues Lys-305, Lys-387, and Lys-484 each participate in a glycyl lysine isopeptide (Lys-Gly) (interchain with G-Cter in DncV) cross-link. Cys-493 participates in a covalent cross-link: Glycyl cysteine dithioester (Cys-Gly) (interchain with G-Cter in DncV). Residues Cys-493, Cys-496, and Cys-513 each act as for E1-like domain in the active site. Cys-513 participates in a covalent cross-link: Glycyl cysteine dithioester (Cys-Gly) (interchain with G-Cter in DncV). Lys-523 is covalently cross-linked (Glycyl lysine isopeptide (Lys-Gly) (interchain with G-Cter in DncV)).

This sequence in the C-terminal section; belongs to the HesA/MoeB/ThiF family. In terms of assembly, a Cap2 dimer is bound on either side by a DncV monomer. Post-translationally, conjugated to DncV via 5 different Lys residues and 3 Cys residues.

Functionally, CD-NTase priming component of a CBASS antiviral system. CBASS (cyclic oligonucleotide-based antiphage signaling system) provides immunity against bacteriophages. The CD-NTase protein (DncV) synthesizes cyclic nucleotides in response to infection; these serve as specific second messenger signals. The signals activate a diverse range of effectors, leading to bacterial cell death and thus abortive phage infection. A type II-A(GA) CBASS system. Its function is as follows. Conjugates DncV to itself in vitro and to other cellular proteins in vivo; conjugation requires ATP. This primes DncV, upon phage infection CdnA activates and makes cyclic nucleotides. Protects E.coli against phage infection. When capV and dncV are introduced in E.coli MG1655 there is 1000-fold protection against phage P1; protection against other phage (T2, T4, T5, T6 and lambda-vir) requires the 2 subsequent genes. In another paper the capV-dncV-cap2-cap3 operon gives 10(4)-10(5)-fold protection against phages lambda, T2, T4 and T6, about 1000-fold protection against P1 and 10-fold protection against T5. This Escherichia coli (strain TW11681) protein is ATP-dependent ubiquitin transferase-like protein Cap2.